A 70-amino-acid polypeptide reads, in one-letter code: DNA-directed RNA polymerase subunit epsilon (70 aa).

Belongs to the RNA polymerase subunit epsilon family. In terms of assembly, RNAP is composed of a core of 2 alpha, a beta and a beta' subunit. The core is associated with a delta subunit, and at least one of epsilon or omega. When a sigma factor is associated with the core the holoenzyme is formed, which can initiate transcription.

The enzyme catalyses RNA(n) + a ribonucleoside 5'-triphosphate = RNA(n+1) + diphosphate. Its function is as follows. A non-essential component of RNA polymerase (RNAP). This Bacillus mycoides (strain KBAB4) (Bacillus weihenstephanensis) protein is DNA-directed RNA polymerase subunit epsilon.